A 324-amino-acid chain; its full sequence is Homoserine kinase (324 aa).

Position 100–110 (100–110) interacts with ATP; that stretch reads PLSSGMGSSAA.

The protein belongs to the GHMP kinase family. Homoserine kinase subfamily.

The protein localises to the cytoplasm. It catalyses the reaction L-homoserine + ATP = O-phospho-L-homoserine + ADP + H(+). The protein operates within amino-acid biosynthesis; L-threonine biosynthesis; L-threonine from L-aspartate: step 4/5. Its function is as follows. Catalyzes the ATP-dependent phosphorylation of L-homoserine to L-homoserine phosphate. The polypeptide is Homoserine kinase (Chlorobaculum tepidum (strain ATCC 49652 / DSM 12025 / NBRC 103806 / TLS) (Chlorobium tepidum)).